The chain runs to 367 residues: Phosphoribosylaminoimidazole-succinocarboxamide synthase (367 aa).

Belongs to the SAICAR synthetase family.

The catalysed reaction is 5-amino-1-(5-phospho-D-ribosyl)imidazole-4-carboxylate + L-aspartate + ATP = (2S)-2-[5-amino-1-(5-phospho-beta-D-ribosyl)imidazole-4-carboxamido]succinate + ADP + phosphate + 2 H(+). The protein operates within purine metabolism; IMP biosynthesis via de novo pathway; 5-amino-1-(5-phospho-D-ribosyl)imidazole-4-carboxamide from 5-amino-1-(5-phospho-D-ribosyl)imidazole-4-carboxylate: step 1/2. The sequence is that of Phosphoribosylaminoimidazole-succinocarboxamide synthase from Shewanella sp. (strain MR-7).